We begin with the raw amino-acid sequence, 225 residues long: LHFPL tetraspan subfamily member 2a protein (225 aa).

4 helical membrane passes run 11 to 31, 99 to 119, 129 to 149, and 178 to 198; these read MLWT…FLST, IFLA…IFTM, IFNV…VGLV, and AGWA…CAVF.

This sequence belongs to the LHFP family.

It is found in the membrane. Its function is as follows. Plays a role in fertility. Involved in distal reproductive tract development. This is LHFPL tetraspan subfamily member 2a protein from Danio rerio (Zebrafish).